The primary structure comprises 350 residues: tRNA uridine(34) hydroxylase (350 aa).

The Rhodanese domain maps to 146 to 240; sequence DDPDAVFIDM…YARRARAQGL (95 aa). C200 acts as the Cysteine persulfide intermediate in catalysis. Positions 319-328 are enriched in basic and acidic residues; sequence RRRRAGRENG. A disordered region spans residues 319–350; that stretch reads RRRRAGRENGNKIFNKSRGRLNSKLSIPDPAE.

This sequence belongs to the TrhO family.

The enzyme catalyses uridine(34) in tRNA + AH2 + O2 = 5-hydroxyuridine(34) in tRNA + A + H2O. Its function is as follows. Catalyzes oxygen-dependent 5-hydroxyuridine (ho5U) modification at position 34 in tRNAs. This is tRNA uridine(34) hydroxylase from Salmonella typhimurium (strain LT2 / SGSC1412 / ATCC 700720).